A 343-amino-acid chain; its full sequence is MIKLSNITKVFHQGTRTIQALNNVSLHVPAGQIYGVIGASGAGKSTLIRCVNLLERPTEGSVLVDGQELTTLSESELTKARRQIGMIFQHFNLLSSRTVFGNVALPLELDNTPKDEIKRRVTELLSLVGLGDKHDSYPSNLSGGQKQRVAIARALASNPKVLLCDEATSALDPATTRSILELLKDINRRLGLTILLITHEMDVVKRICDCVAVISNGELIEQDTVSEVFSHPKTPLAQKFIQSTLHLDIPEDYQERLQAEPFTDCVPMLRLEFTGQSVDAPLLSETARRFNVNNNIISAQMDYAGGVKFGIMLTEMHGTQQDTQAAIAWLQEHHVKVEVLGYV.

An ABC transporter domain is found at isoleucine 2–isoleucine 241. Glycine 38–serine 45 provides a ligand contact to ATP.

Belongs to the ABC transporter superfamily. Methionine importer (TC 3.A.1.24) family. In terms of assembly, the complex is composed of two ATP-binding proteins (MetN), two transmembrane proteins (MetI) and a solute-binding protein (MetQ).

It is found in the cell inner membrane. The enzyme catalyses L-methionine(out) + ATP + H2O = L-methionine(in) + ADP + phosphate + H(+). It catalyses the reaction D-methionine(out) + ATP + H2O = D-methionine(in) + ADP + phosphate + H(+). In terms of biological role, part of the ABC transporter complex MetNIQ involved in methionine import. Responsible for energy coupling to the transport system. This is Methionine import ATP-binding protein MetN from Escherichia coli O157:H7.